A 406-amino-acid polypeptide reads, in one-letter code: 5-cytosine rRNA methyltransferase NSUN4 (406 aa).

S-adenosyl-L-methionine-binding residues include G207, G208, K209, D226, R231, D259, G260, and D277. The Nucleophile role is filled by C332.

This sequence belongs to the class I-like SAM-binding methyltransferase superfamily. RsmB/NOP family.

It localises to the mitochondrion. The enzyme catalyses a cytidine in rRNA + S-adenosyl-L-methionine = a 5-methylcytidine in rRNA + S-adenosyl-L-homocysteine + H(+). It carries out the reaction a cytidine in mRNA + S-adenosyl-L-methionine = a 5-methylcytidine in mRNA + S-adenosyl-L-homocysteine + H(+). Functionally, involved in mitochondrial ribosome large subunit biogenesis. In terms of biological role, mitochondrial RNA cytosine C(5)-methyltransferase that methylates cytosine to 5-methylcytosine (m5C) in various RNAs, such as rRNAs, mRNAs and some long non-coding RNAs (lncRNAs). Involved in mitochondrial ribosome small subunit (SSU) maturation by catalyzing methylation of mitochondrial 12S rRNA. The polypeptide is 5-cytosine rRNA methyltransferase NSUN4 (nsun4) (Xenopus tropicalis (Western clawed frog)).